The chain runs to 296 residues: Zinc finger CCCH-type antiviral protein 1-like (296 aa).

A2 is subject to N-acetylalanine. 2 C3H1-type zinc fingers span residues L111 to H136 and V198 to I219.

This chain is Zinc finger CCCH-type antiviral protein 1-like (Zc3hav1l), found in Mus musculus (Mouse).